Here is a 290-residue protein sequence, read N- to C-terminus: Porphobilinogen deaminase (290 aa).

Position 237 is an S-(dipyrrolylmethanemethyl)cysteine (C237).

This sequence belongs to the HMBS family. As to quaternary structure, monomer. It depends on dipyrromethane as a cofactor.

It carries out the reaction 4 porphobilinogen + H2O = hydroxymethylbilane + 4 NH4(+). Its pathway is porphyrin-containing compound metabolism; protoporphyrin-IX biosynthesis; coproporphyrinogen-III from 5-aminolevulinate: step 2/4. Tetrapolymerization of the monopyrrole PBG into the hydroxymethylbilane pre-uroporphyrinogen in several discrete steps. The polypeptide is Porphobilinogen deaminase (Clostridium botulinum (strain Loch Maree / Type A3)).